Consider the following 339-residue polypeptide: ATPase GET3 (339 aa).

34–41 (KGGVGKTT) is an ATP binding site. Residue Asp63 is part of the active site. 2 residues coordinate ATP: Glu244 and Asn271. Residues Cys282 and Cys285 each coordinate Zn(2+).

This sequence belongs to the arsA ATPase family. As to quaternary structure, homodimer.

It is found in the cytoplasm. The protein resides in the endoplasmic reticulum. In terms of biological role, ATPase required for the post-translational delivery of tail-anchored (TA) proteins to the endoplasmic reticulum. Recognizes and selectively binds the transmembrane domain of TA proteins in the cytosol. This complex then targets to the endoplasmic reticulum by membrane-bound receptors, where the tail-anchored protein is released for insertion. This process is regulated by ATP binding and hydrolysis. ATP binding drives the homodimer towards the closed dimer state, facilitating recognition of newly synthesized TA membrane proteins. ATP hydrolysis is required for insertion. Subsequently, the homodimer reverts towards the open dimer state, lowering its affinity for the membrane-bound receptor, and returning it to the cytosol to initiate a new round of targeting. The sequence is that of ATPase GET3 from Podospora anserina (strain S / ATCC MYA-4624 / DSM 980 / FGSC 10383) (Pleurage anserina).